The chain runs to 1502 residues: E3 ubiquitin-protein ligase UPL4 (1502 aa).

The span at 1-21 shows a compositional bias: basic and acidic residues; it reads MENRGQKRMEVVEELPADKRA. The tract at residues 1–107 is disordered; that stretch reads MENRGQKRME…DYQRQRSSGD (107 aa). A compositionally biased stretch (polar residues) spans 22-46; it reads CNSQDFRPSTSGSSVQAQANDTNPG. The span at 67–90 shows a compositional bias: acidic residues; it reads DEEEQEEQDKEDSDYGSCDSDEED. A compositionally biased stretch (basic and acidic residues) spans 91–107; that stretch reads PRQRVLQDYQRQRSSGD. 4 ARM repeats span residues 143 to 183, 186 to 226, 228 to 265, and 267 to 306; these read EESL…YLCD, PPSV…KISR, EPVACLNAGAIMAVLSFIDFFSTSIQRVAISTVVNICK, and LSSESPSPFMDAVPILCTLLQYEDRQLVENVAICLTKIAD. The interval 833–881 is disordered; it reads CQAESSSPMEIDSESSDASQLQGSQVEDQTQLPGQQNASSSETSSEKED. The segment covering 849–875 has biased composition (polar residues); it reads DASQLQGSQVEDQTQLPGQQNASSSET. The segment at 1022 to 1096 is K-box; that stretch reads RPVPHSEFVS…IRHHPQHLSS (75 aa). Residues 1128-1502 enclose the HECT domain; the sequence is KMMELYGNQK…TEGQGSFHLS (375 aa). C1469 serves as the catalytic Glycyl thioester intermediate.

Belongs to the UPL family. K-HECT subfamily.

The enzyme catalyses S-ubiquitinyl-[E2 ubiquitin-conjugating enzyme]-L-cysteine + [acceptor protein]-L-lysine = [E2 ubiquitin-conjugating enzyme]-L-cysteine + N(6)-ubiquitinyl-[acceptor protein]-L-lysine.. The protein operates within protein modification; protein ubiquitination. Its function is as follows. Probable E3 ubiquitin-protein ligase which mediates ubiquitination and subsequent proteasomal degradation of target proteins. The polypeptide is E3 ubiquitin-protein ligase UPL4 (UPL4) (Arabidopsis thaliana (Mouse-ear cress)).